The sequence spans 990 residues: MRIWCFSCFTDEDEDEEDDNGGRVKKQSLATAMDNSNGDGDFVNFGENERAPRVPRWRLRLCAEESEAAWAELDRFWTSEIPLNQLVQGESSSNVVAEAEDCTMEEADHDSYHKRAKVYSGLAECRSVSGVSSDAGNSVSSVERTVSFGIASSSRTDTDMFCQNFILNYNRKDGKKDDGDDNGSSDTEDFEVHIDLTDDLLHMVFSFLNHVDLCRSAMVCRQWRVASAHEDFWRVLNFENIRISMEQFENMCSRYPNATEVNVYGAPAVNALAMKAATTLRNLEVLTIGKGHISESFFQALGECNMLRSVTVSDAILGNGAQEIHLSHDRLRELKITKCRVMRLSIRCPQLRSLSLKRSNMSQAMLNCPLLQLLDIASCHKLLDAAIRSAAISCPQLESLDVSNCSCVSDETLREIAQACANLHILNASYCPNISLESVHLPMLTVLKLHSCEGITSASMTWIANSPALEVLELDNCNLLTTVSLHLSRLQSISLVHCRKFTDLNLQSIMLSSITVSNCPALRRITITSNALRRLALQKQENLTTLVLQCHSLQEVDLSDCESLSNSVCKIFSDDGGCPMLKSLILDNCESLTAVRFCNSSLASLSLVGCRAVTSLELKCPRIEQICLDGCDHLETAFFQPVALRSLNLGICPKLSVLNIEAPYMVSLELKGCGVLSEASIMCPLLTSLDASFCSQLRDDCLSATTASCPLIESLVLMSCPSIGSDGLSSLNGLPNLTVLDLSYTFLMNLEPVFKSCIQLKVLKLQACKYLTDSSLEPLYKEGALPALEELDLSYGTLCQTAIDDLLACCTHLTHLSLNGCVNMHDLDWGSTSVHLFDYFGVYSSSDNTQEPAETANRLLQNLNCVGCPNIRKVLIPPAARFYHLSTLNLSLSVNLKEVDLTCSNLVLLNLSNCCSLEVLKLGCPRLASLFLQSCNMDEAGVEAAISGCSSLETLDLRFCPKISSVSMSKFRTVCPSLKRVFSSPNLLQD.

The region spanning 190–236 (FEVHIDLTDDLLHMVFSFLNHVDLCRSAMVCRQWRVASAHEDFWRVL) is the F-box domain. LRR repeat units lie at residues 237–258 (NFENIRISMEQFENMCSRYPNA), 280–303 (LRNLEVLTIGKGHISESFFQALGE), 317–341 (LGNGAQEIHLSHDRLRELKITKCRV), 348–373 (CPQLRSLSLKRSNMSQAMLNCPLLQL), 397–423 (LESLDVSNCSCVSDETLREIAQACANL), 441–465 (LPMLTVLKLHSCEGITSASMTWIAN), 466–477 (SPALEVLELDNC), 478–503 (NLLTTVSLHLSRLQSISLVHCRKFTD), 519–542 (CPALRRITITSNALRRLALQKQEN), 550–574 (CHSLQEVDLSDCESLSNSVCKIFSD), 589–612 (CESLTAVRFCNSSLASLSLVGCRA), 614–633 (TSLELKCPRIEQICLDGCDH), 640–652 (QPVALRSLNLGIC), 653–678 (PKLSVLNIEAPYMVSLELKGCGVLSE), 734–756 (LPNLTVLDLSYTFLMNLEPVFKS), 758–782 (IQLKVLKLQACKYLTDSSLEPLYKE), 785–809 (LPALEELDLSYGTLCQTAIDDLLAC), 813–839 (LTHLSLNGCVNMHDLDWGSTSVHLFDY), 882–893 (FYHLSTLNLSLS), 894–914 (VNLKEVDLTCSNLVLLNLSNC), 915–937 (CSLEVLKLGCPRLASLFLQSCNM), and 949–973 (CSSLETLDLRFCPKISSVSMSKFRT).

The sequence is that of F-box/LRR-repeat protein 15 (FBL15) from Arabidopsis thaliana (Mouse-ear cress).